Reading from the N-terminus, the 292-residue chain is Phosphatidylglycerol--prolipoprotein diacylglyceryl transferase (292 aa).

The next 7 helical transmembrane spans lie at 25 to 45 (ITLH…WWYA), 70 to 90 (FVVW…VLVW), 102 to 122 (IIAV…IIIA), 138 to 158 (FDII…CNFI), 193 to 213 (FMEG…FKAF), 217 to 237 (GTVS…SEVY), and 255 to 275 (GFTY…YLLL). An a 1,2-diacyl-sn-glycero-3-phospho-(1'-sn-glycerol)-binding site is contributed by Arg153.

Belongs to the Lgt family.

The protein localises to the cell inner membrane. It carries out the reaction L-cysteinyl-[prolipoprotein] + a 1,2-diacyl-sn-glycero-3-phospho-(1'-sn-glycerol) = an S-1,2-diacyl-sn-glyceryl-L-cysteinyl-[prolipoprotein] + sn-glycerol 1-phosphate + H(+). Its pathway is protein modification; lipoprotein biosynthesis (diacylglyceryl transfer). Functionally, catalyzes the transfer of the diacylglyceryl group from phosphatidylglycerol to the sulfhydryl group of the N-terminal cysteine of a prolipoprotein, the first step in the formation of mature lipoproteins. This chain is Phosphatidylglycerol--prolipoprotein diacylglyceryl transferase, found in Bartonella tribocorum (strain CIP 105476 / IBS 506).